A 736-amino-acid chain; its full sequence is DNA topoisomerase 1 (736 aa).

Residues 2-113 (KHLIIVESPA…SYPRIVFHEI (112 aa)) form the Toprim domain. The Mg(2+) site is built by Glu-8 and Asp-82. One can recognise a Topo IA-type catalytic domain in the interval 129–552 (DMSKVNAQQA…DFYYPFMDKI (424 aa)). Residues 163-168 (SAGRVQ) form an interaction with DNA region. Tyr-297 functions as the O-(5'-phospho-DNA)-tyrosine intermediate in the catalytic mechanism. 4 C4-type zinc fingers span residues 572-598 (CPKCGGELVKKNSRYGEFIACNNYPKC), 616-642 (CEKCGGEMVQKFSRNGAFLACNNYPEC), 663-689 (CPECGGDIALKRSKKGSFYGCNNYPKC), and 702-725 (CEKCHYLMSERIYRKKKAHECIKC).

The protein belongs to the type IA topoisomerase family. In terms of assembly, monomer. Mg(2+) serves as cofactor.

The catalysed reaction is ATP-independent breakage of single-stranded DNA, followed by passage and rejoining.. Functionally, releases the supercoiling and torsional tension of DNA, which is introduced during the DNA replication and transcription, by transiently cleaving and rejoining one strand of the DNA duplex. Introduces a single-strand break via transesterification at a target site in duplex DNA. The scissile phosphodiester is attacked by the catalytic tyrosine of the enzyme, resulting in the formation of a DNA-(5'-phosphotyrosyl)-enzyme intermediate and the expulsion of a 3'-OH DNA strand. The free DNA strand then undergoes passage around the unbroken strand, thus removing DNA supercoils. Finally, in the religation step, the DNA 3'-OH attacks the covalent intermediate to expel the active-site tyrosine and restore the DNA phosphodiester backbone. The polypeptide is DNA topoisomerase 1 (Helicobacter pylori (strain ATCC 700392 / 26695) (Campylobacter pylori)).